The primary structure comprises 903 residues: uncharacterized protein (903 aa).

This is an uncharacterized protein from Gallid herpesvirus 2 (strain Chicken/Md5/ATCC VR-987) (GaHV-2).